Consider the following 1015-residue polypeptide: Transposase for transposon Tn3 (1015 aa).

The protein belongs to the transposase 7 family.

Required for transposition of transposon Tn3. This is Transposase for transposon Tn3 (tnpA) from Escherichia coli.